We begin with the raw amino-acid sequence, 459 residues long: Zinc finger protein ZPR1 (459 aa).

The span at Met1–Gly29 shows a compositional bias: low complexity. The interval Met1–Gln43 is disordered. 2 C4-type zinc fingers span residues Cys51–Cys83 and Cys259–Cys291. Residues Asn438–Arg459 form a disordered region.

This sequence belongs to the ZPR1 family. Component of an import snRNP complex composed of KPNB1, SNUPN, SMN1 and ZNF259. Interacts (via C-terminal region) with SMN1 (via C-terminal region); the interaction occurs after treatment with serum. Interacts with elongation factor 1-alpha EEF1A1; the interaction occurs in a epidermal growth factor (EGF)-dependent manner. Interacts (via zinc fingers) with EGFR (via C-terminal cytoplasmic kinase domain); the interaction is negatively regulated in response to epidermal growth factor (EGF) stimulation and EGFR kinase activity. May also bind to the PDGFR receptor.

It is found in the nucleus. It localises to the cytoplasm. The protein resides in the nucleolus. The protein localises to the perinuclear region. Its subcellular location is the gem. It is found in the cajal body. It localises to the cell projection. The protein resides in the axon. The protein localises to the growth cone. Functionally, acts as a signaling molecule that communicates proliferative growth signals from the cytoplasm to the nucleus. Plays a role for the localization and accumulation of the survival motor neuron protein SMN1 in sub-nuclear bodies, including gems and Cajal bodies. Induces neuron differentiation and stimulates axonal growth and formation of growth cone in spinal cord motor neurons. Plays a role in the splicing of cellular pre-mRNAs. May be involved in H(2)O(2)-induced neuronal cell death. The protein is Zinc finger protein ZPR1 (ZNF259) of Bos taurus (Bovine).